The sequence spans 346 residues: Partitioning defective 6 homolog alpha (346 aa).

The segment at 1-116 (MARPQRTPAR…SNSLQRRKKG (116 aa)) is interaction with PRKCI and PRKCZ. The PB1 domain maps to 15 to 95 (IVEVKSKFDA…PPLRLLVQKR (81 aa)). The tract at residues 126-253 (RTRPPLLISL…VTVKPANQRN (128 aa)) is interaction with PARD3 and CDC42. Positions 133–150 (ISLPQDFRQVSSVIDVDL) constitute a Pseudo-CRIB domain. In terms of domain architecture, PDZ spans 157–250 (RVRLHKHGSD…NLIVTVKPAN (94 aa)). A disordered region spans residues 257–346 (RGASGRLTGP…IRGDGSGFSL (90 aa)). Residues Ser278 and Ser345 each carry the phosphoserine modification.

Belongs to the PAR6 family. As to quaternary structure, interacts with MAP2K5. Interacts with PARD3. Interacts with GTP-bound forms of CDC42, RHOQ/TC10 and RAC1. Interacts with the N-terminal part of PRKCI and PRKCZ. Part of a complex with PARD3, CDC42 or RAC1 and PRKCI or PRKCZ. Part of a complex with LLGL1 and PRKCI. Interacts with human T-cell leukemia virus type I TAX protein. Interacts with PALS1 and CRB3. Interacts with TGFBR1; involved in TGF-beta induced epithelial to mesenchymal transition. Interacts with ECT2 ('Thr-359' phosphorylated form) and PRKCI. Interacts with DCTN1 and PCM1. Post-translationally, phosphorylated by the TGF-beta receptor. In terms of processing, ubiquitinated by the SCF(FBXO31) complex, leading to its proteasomal degradation. As to expression, expressed in pancreas, skeletal muscle, brain and heart. Weakly expressed in kidney and placenta.

The protein localises to the cytoplasm. It localises to the cell membrane. It is found in the cell projection. The protein resides in the ruffle. Its subcellular location is the cell junction. The protein localises to the tight junction. It localises to the cytoskeleton. It is found in the microtubule organizing center. The protein resides in the centrosome. Its subcellular location is the centriolar satellite. Functionally, adapter protein involved in asymmetrical cell division and cell polarization processes. Probably involved in the formation of epithelial tight junctions. Association with PARD3 may prevent the interaction of PARD3 with F11R/JAM1, thereby preventing tight junction assembly. The PARD6-PARD3 complex links GTP-bound Rho small GTPases to atypical protein kinase C proteins. Regulates centrosome organization and function. Essential for the centrosomal recruitment of key proteins that control centrosomal microtubule organization. This chain is Partitioning defective 6 homolog alpha (PARD6A), found in Homo sapiens (Human).